Here is a 297-residue protein sequence, read N- to C-terminus: Mitochondrial substrate carrier family protein P (297 aa).

3 Solcar repeats span residues 12 to 98 (KPSW…IKNH), 104 to 189 (SSSF…LKRI), and 201 to 293 (ISGT…LSNF). The next 6 membrane-spanning stretches (helical) occupy residues 15–35 (WVSF…VAPL), 66–86 (GIKG…PYAA), 107–127 (FQIF…TYPL), 165–185 (IQPT…TFEF), 207–227 (LIAG…FDVV), and 262–282 (ILAL…TASI).

It belongs to the mitochondrial carrier (TC 2.A.29) family.

The protein resides in the mitochondrion inner membrane. Its function is as follows. Mitochondrial solute carriers shuttle metabolites, nucleotides, and cofactors through the mitochondrial inner membrane. Required for the accumulation of coenzyme A in the mitochondrial matrix. The protein is Mitochondrial substrate carrier family protein P (mcfP) of Dictyostelium discoideum (Social amoeba).